We begin with the raw amino-acid sequence, 925 residues long: Periplasmic nitrate reductase (925 aa).

The segment at residues 1–30 is a signal peptide (tat-type signal); that stretch reads MDRREFIKSSAAAAACSAAGIAVPSSLSAA. A 4Fe-4S Mo/W bis-MGD-type domain is found at 36–92; the sequence is WRWDKSACRFCGTGCGIMVATKNGKIVAVKGDPLAPVNRGLNCIKGYFNAKIMYGED. The [4Fe-4S] cluster site is built by cysteine 43, cysteine 46, cysteine 50, and cysteine 78. Residues lysine 80, glutamine 148, asparagine 173, cysteine 177, 210–217, methionine 418, glutamine 422, asparagine 528, 553–554, lysine 576, aspartate 603, and 815–824 contribute to the Mo-bis(molybdopterin guanine dinucleotide) site; these read WGANMAEM, SD, and TGRVLEHWHS. A substrate-binding site is contributed by tryptophan 891. Asparagine 899 and lysine 916 together coordinate Mo-bis(molybdopterin guanine dinucleotide).

Belongs to the prokaryotic molybdopterin-containing oxidoreductase family. NasA/NapA/NarB subfamily. As to quaternary structure, component of the periplasmic nitrate reductase NapAB complex composed of NapA and NapB. [4Fe-4S] cluster serves as cofactor. Mo-bis(molybdopterin guanine dinucleotide) is required as a cofactor. In terms of processing, predicted to be exported by the Tat system. The position of the signal peptide cleavage has not been experimentally proven.

It is found in the periplasm. It catalyses the reaction 2 Fe(II)-[cytochrome] + nitrate + 2 H(+) = 2 Fe(III)-[cytochrome] + nitrite + H2O. In terms of biological role, catalytic subunit of the periplasmic nitrate reductase complex NapAB. Receives electrons from NapB and catalyzes the reduction of nitrate to nitrite. The polypeptide is Periplasmic nitrate reductase (Campylobacter fetus subsp. fetus (strain 82-40)).